The following is a 558-amino-acid chain: Atlastin-1 (558 aa).

Residues 1-27 form a disordered region; the sequence is MAKNRRDRNSWGGFSEKTYEWSSEEEE. Residues 1–34 are N-terminal hypervariable region (HVR); that stretch reads MAKNRRDRNSWGGFSEKTYEWSSEEEEPVKKAGP. The Cytoplasmic segment spans residues 1 to 449; the sequence is MAKNRRDRNS…NIFHAARTPA (449 aa). 3 positions are modified to phosphoserine: Ser10, Ser22, and Ser23. The region spanning 64-309 is the GB1/RHD3-type G domain; the sequence is DKEVVAVSVA…LIPWLLSPES (246 aa). Arg77, Lys78, Gly79, Lys80, Ser81, Phe82, Gln148, Arg217, Asp218, Val276, and Asn279 together coordinate GDP. GTP contacts are provided by Arg77, Lys78, Gly79, Lys80, Ser81, and Phe82. Residue Ser81 participates in Mg(2+) binding. 3 residues coordinate GTP: Arg217, Asp218, and Val276. A 3HB (three-helix bundle) domain region spans residues 347 to 438; it reads MLQATAEANN…YIQYIKHNDS (92 aa). Lys395 bears the N6-acetyllysine mark. Residues 412–439 are a coiled coil; sequence EFSRRYLQQLESEIDELYIQYIKHNDSK. The segment at 439–447 is linker; sequence KNIFHAART. Residues 450 to 470 traverse the membrane as a helical segment; that stretch reads TLFVVIFITYVIAGVTGFIGL. Residue Asp471 is a topological domain, lumenal. The chain crosses the membrane as a helical span at residues 472–492; sequence IIASLCNMIMGLTLITLCTWA. Residues 493 to 558 are Cytoplasmic-facing; it reads YIRYSGEYRE…STEQSEKKKM (66 aa). The interval 521–558 is autoinhibitory domain; it reads NEALYKLYSAAATHRHLYHQAFPTPKSESTEQSEKKKM.

Belongs to the TRAFAC class dynamin-like GTPase superfamily. GB1/RHD3 GTPase family. GB1 subfamily. In terms of assembly, monomeric and homodimeric. The homodimer, transiently formed by two molecules on opposing membranes, is the active form mediating ER membrane fusion. Interacts with REEP1, REEP5, RTN3 and RTN4 (via the transmembrane region); these proteins are involved in endoplasmic reticulum tubular network organization. Interacts with ZFYVE27; both proteins are involved in endoplasmic reticulum tubular network organization. Interacts with ARL6IP1; both proteins are involved in endoplasmic reticulum tubular network organization. Interacts with SPAST; the interaction is direct, could recruit SPAST to Golgi membranes. Interacts (via N-terminal region) with MAP4K4 (via CNH regulatory domain). May interact with TMED2. Interacts with CPT1C. Post-translationally, phosphorylated. Phosphorylation, by different kinases, of the N-terminal hypervariable region (HVR) regulates the ATL1-mediated membrane tethering step.

Its subcellular location is the endoplasmic reticulum membrane. The protein resides in the golgi apparatus membrane. It localises to the cell projection. It is found in the axon. The catalysed reaction is GTP + H2O = GDP + phosphate + H(+). Its function is as follows. Atlastin-1 (ATL1) is a membrane-anchored GTPase that mediates the GTP-dependent fusion of endoplasmic reticulum (ER) membranes, maintaining the continuous ER network. It facilitates the formation of three-way junctions where ER tubules intersect. Two atlastin-1 on neighboring ER tubules bind GTP and form loose homodimers through the GB1/RHD3-type G domains and 3HB regions. Upon GTP hydrolysis, the 3HB regions tighten, pulling the membranes together to drive their fusion. After fusion, the homodimer disassembles upon release of inorganic phosphate (Pi). Subsequently, GDP dissociates, resetting the monomers to a conformation ready for a new fusion cycle. May also regulate more or less directly Golgi biogenesis. Indirectly regulates axonal development. In Pongo abelii (Sumatran orangutan), this protein is Atlastin-1.